We begin with the raw amino-acid sequence, 311 residues long: tRNA dimethylallyltransferase (311 aa).

12–19 (GPTASGKT) contacts ATP. 14–19 (TASGKT) contacts substrate. 2 interaction with substrate tRNA regions span residues 37–40 (DSAM) and 161–165 (QRIQR).

It belongs to the IPP transferase family. As to quaternary structure, monomer. The cofactor is Mg(2+).

It carries out the reaction adenosine(37) in tRNA + dimethylallyl diphosphate = N(6)-dimethylallyladenosine(37) in tRNA + diphosphate. Its function is as follows. Catalyzes the transfer of a dimethylallyl group onto the adenine at position 37 in tRNAs that read codons beginning with uridine, leading to the formation of N6-(dimethylallyl)adenosine (i(6)A). This chain is tRNA dimethylallyltransferase, found in Coxiella burnetii (strain RSA 331 / Henzerling II).